A 194-amino-acid polypeptide reads, in one-letter code: Probable nicotinate-nucleotide adenylyltransferase (194 aa).

The protein belongs to the NadD family.

The catalysed reaction is nicotinate beta-D-ribonucleotide + ATP + H(+) = deamido-NAD(+) + diphosphate. Its pathway is cofactor biosynthesis; NAD(+) biosynthesis; deamido-NAD(+) from nicotinate D-ribonucleotide: step 1/1. Catalyzes the reversible adenylation of nicotinate mononucleotide (NaMN) to nicotinic acid adenine dinucleotide (NaAD). In Brucella abortus (strain 2308), this protein is Probable nicotinate-nucleotide adenylyltransferase.